A 388-amino-acid chain; its full sequence is Protein RecA (388 aa).

Position 79–86 (79–86) interacts with ATP; it reads GPESSGKT. A disordered region spans residues 347–388; sequence IDGEEVSEQDTENKKDEPKKEEAVNEEVPLDLGDELEIEIEE. Positions 357–369 are enriched in basic and acidic residues; it reads TENKKDEPKKEEA. A compositionally biased stretch (acidic residues) spans 370-388; it reads VNEEVPLDLGDELEIEIEE.

It belongs to the RecA family.

The protein resides in the cytoplasm. In terms of biological role, can catalyze the hydrolysis of ATP in the presence of single-stranded DNA, the ATP-dependent uptake of single-stranded DNA by duplex DNA, and the ATP-dependent hybridization of homologous single-stranded DNAs. It interacts with LexA causing its activation and leading to its autocatalytic cleavage. The sequence is that of Protein RecA from Streptococcus pneumoniae (strain Hungary19A-6).